A 592-amino-acid chain; its full sequence is Ferric-chelate reductase 1 (592 aa).

A helical transmembrane segment spans residues 2 to 22 (AVSGFTLGTCILLLHISYVAN). Residues 13-179 (LLLHISYVAN…FTTPKATVVP (167 aa)) form the Reelin domain. Asn-138, Asn-308, and Asn-321 each carry an N-linked (GlcNAc...) asparagine glycan. The DOMON domain occupies 216–331 (EASCVFLSFT…TSYYIFLADG (116 aa)). The Cytochrome b561 domain occupies 335 to 534 (DGRIYKHSQQ…VGTEVVLEVH (200 aa)). The chain crosses the membrane as a helical span at residues 372-392 (VHGALMFVAWMTTVSIGVLVA). Positions 373 and 414 each coordinate heme b. 2 consecutive transmembrane segments (helical) span residues 415-435 (RMLM…PFIY) and 446-466 (HPYL…LAVF). The heme b site is built by His-446 and His-482. 3 consecutive transmembrane segments (helical) span residues 491–511 (IIAV…LPDS), 515–535 (YAMT…EVHA), and 569–589 (AVLA…LSAI).

Belongs to the FRRS1 family. Heme b serves as cofactor.

It localises to the membrane. In terms of biological role, ferric-chelate reductases reduce Fe(3+) to Fe(2+) before its transport from the endosome to the cytoplasm. In Homo sapiens (Human), this protein is Ferric-chelate reductase 1 (FRRS1).